We begin with the raw amino-acid sequence, 558 residues long: Atlastin-1 (558 aa).

The disordered stretch occupies residues Met1–Glu27. Positions Met1–Pro34 are N-terminal hypervariable region (HVR). Topologically, residues Met1 to Ala449 are cytoplasmic. A phosphoserine mark is found at Ser10, Ser22, and Ser23. The GB1/RHD3-type G domain maps to Asp64–Ser309. Residues Arg77, Lys78, Gly79, Lys80, Ser81, Phe82, Gln148, Arg217, Asp218, Val276, and Asn279 each contribute to the GDP site. Positions 77, 78, 79, 80, 81, and 82 each coordinate GTP. Residue Ser81 coordinates Mg(2+). GTP contacts are provided by Arg217, Asp218, and Val276. The 3HB (three-helix bundle) domain stretch occupies residues Met347 to Ser438. Residue Lys395 is modified to N6-acetyllysine. Residues Glu412–Lys439 adopt a coiled-coil conformation. Positions Lys439–Thr447 are linker. Residues Thr450–Leu470 form a helical membrane-spanning segment. Residue Asp471 is a topological domain, lumenal. Residues Ile472–Ala492 traverse the membrane as a helical segment. Topologically, residues Tyr493–Met558 are cytoplasmic. Residues Asn521–Met558 form an autoinhibitory domain region.

The protein belongs to the TRAFAC class dynamin-like GTPase superfamily. GB1/RHD3 GTPase family. GB1 subfamily. As to quaternary structure, monomeric and homodimeric. The homodimer, transiently formed by two molecules on opposing membranes, is the active form mediating ER membrane fusion. Interacts with REEP1, REEP5, RTN3 and RTN4 (via the transmembrane region); these proteins are involved in endoplasmic reticulum tubular network organization. Interacts with ZFYVE27; both proteins are involved in endoplasmic reticulum tubular network organization. Interacts with ARL6IP1; both proteins are involved in endoplasmic reticulum tubular network organization. Interacts with SPAST; the interaction is direct, could recruit SPAST to Golgi membranes. Interacts (via N-terminal region) with MAP4K4 (via CNH regulatory domain). May interact with TMED2. Interacts with CPT1C. Post-translationally, phosphorylated. Phosphorylation, by different kinases, of the N-terminal hypervariable region (HVR) regulates the ATL1-mediated membrane tethering step.

The protein resides in the endoplasmic reticulum membrane. The protein localises to the golgi apparatus membrane. It is found in the cell projection. Its subcellular location is the axon. It catalyses the reaction GTP + H2O = GDP + phosphate + H(+). Its function is as follows. Atlastin-1 (ATL1) is a membrane-anchored GTPase that mediates the GTP-dependent fusion of endoplasmic reticulum (ER) membranes, maintaining the continuous ER network. It facilitates the formation of three-way junctions where ER tubules intersect. Two atlastin-1 on neighboring ER tubules bind GTP and form loose homodimers through the GB1/RHD3-type G domains and 3HB regions. Upon GTP hydrolysis, the 3HB regions tighten, pulling the membranes together to drive their fusion. After fusion, the homodimer disassembles upon release of inorganic phosphate (Pi). Subsequently, GDP dissociates, resetting the monomers to a conformation ready for a new fusion cycle. May also regulate more or less directly Golgi biogenesis. Indirectly regulates axonal development. In Macaca fascicularis (Crab-eating macaque), this protein is Atlastin-1.